The chain runs to 470 residues: Probable G-protein coupled receptor 152 (470 aa).

The segment at 1–25 (MDTTMEADLGATGHRPRTELDDEDS) is disordered. At 1 to 33 (MDTTMEADLGATGHRPRTELDDEDSYPQGGWDT) the chain is on the extracellular side. Residues 34 to 54 (VFLVALLLLGLPANGLMAWLA) form a helical membrane-spanning segment. Residues 55–65 (GSQARHGAGTR) are Cytoplasmic-facing. Residues 66-86 (LALLLLSLALSDFLFLAAAAF) traverse the membrane as a helical segment. Residues 87–105 (QILEIRHGGHWPLGTAACR) are Extracellular-facing. Cys104 and Cys182 are joined by a disulfide. A helical transmembrane segment spans residues 106–126 (FYYFLWGVSYSSGLFLLAALS). Over 127-148 (LDRCLLALCPHWYPGHRPVRLP) the chain is Cytoplasmic. A helical membrane pass occupies residues 149–169 (LWVCAGVWVLATLFSVPWLVF). At 170 to 194 (PEAAVWWYDLVICLDFWDSEELSLR) the chain is on the extracellular side. The chain crosses the membrane as a helical span at residues 195–215 (MLEVLGGFLPFLLLLVCHVLT). Residues 216 to 257 (QATACRTCHRQQQPAACRGFARVARTILSAYVVLRLPYQLAQ) are Cytoplasmic-facing. Residues 258 to 278 (LLYLAFLWDVYSGYLLWEALV) form a helical membrane-spanning segment. The Extracellular segment spans residues 279–281 (YSD). Residues 282–302 (YLILLNSCLSPFLCLMASADL) traverse the membrane as a helical segment. Residues 303–470 (RTLLRSVLSS…PEAAPGAGPT (168 aa)) are Cytoplasmic-facing. Positions 322-470 (PGSFTPTEPQ…PEAAPGAGPT (149 aa)) are disordered. Polar residues-rich tracts occupy residues 325 to 335 (FTPTEPQTQLD) and 348 to 414 (AQSQ…NVQT). A compositionally biased stretch (low complexity) spans 415-425 (PAPAASSVPSP).

The protein belongs to the G-protein coupled receptor 1 family.

It localises to the cell membrane. Orphan receptor. The sequence is that of Probable G-protein coupled receptor 152 (GPR152) from Homo sapiens (Human).